Reading from the N-terminus, the 138-residue chain is Putative pre-16S rRNA nuclease (138 aa).

It belongs to the YqgF nuclease family.

The protein localises to the cytoplasm. In terms of biological role, could be a nuclease involved in processing of the 5'-end of pre-16S rRNA. The protein is Putative pre-16S rRNA nuclease of Caldicellulosiruptor bescii (strain ATCC BAA-1888 / DSM 6725 / KCTC 15123 / Z-1320) (Anaerocellum thermophilum).